Reading from the N-terminus, the 933-residue chain is C-1-tetrahydrofolate synthase, cytoplasmic (933 aa).

Residues 1–303 are methylenetetrahydrofolate dehydrogenase and cyclohydrolase; the sequence is MWEPQGSLDP…DRLLAPTWPL (303 aa). Substrate contacts are provided by residues 51–55 and 98–100; these read YIRMK and VQM. Residues 170–172 and Ser-195 each bind NADP(+); that span reads GRS. Residue 270-274 participates in substrate binding; it reads PGGVG. A formyltetrahydrofolate synthetase region spans residues 304–933; it reads RPLRITPLSP…TKTGEIEGLF (630 aa). ATP is bound at residue 378-385; that stretch reads TPLGEGKS.

It in the N-terminal section; belongs to the tetrahydrofolate dehydrogenase/cyclohydrolase family. In the C-terminal section; belongs to the formate--tetrahydrofolate ligase family. As to quaternary structure, homodimer.

The protein localises to the cytoplasm. The catalysed reaction is (6R)-5,10-methylene-5,6,7,8-tetrahydrofolate + NADP(+) = (6R)-5,10-methenyltetrahydrofolate + NADPH. The enzyme catalyses (6R)-5,10-methenyltetrahydrofolate + H2O = (6R)-10-formyltetrahydrofolate + H(+). It carries out the reaction (6S)-5,6,7,8-tetrahydrofolate + formate + ATP = (6R)-10-formyltetrahydrofolate + ADP + phosphate. It participates in one-carbon metabolism; tetrahydrofolate interconversion. In Spodoptera frugiperda (Fall armyworm), this protein is C-1-tetrahydrofolate synthase, cytoplasmic.